The chain runs to 333 residues: CRISPR-associated endonuclease Cas1 (333 aa).

Positions 162, 226, and 241 each coordinate Mn(2+).

This sequence belongs to the CRISPR-associated endonuclease Cas1 family. As to quaternary structure, homodimer, forms a heterotetramer with a Cas2 homodimer. It depends on Mg(2+) as a cofactor. Requires Mn(2+) as cofactor.

Its function is as follows. CRISPR (clustered regularly interspaced short palindromic repeat), is an adaptive immune system that provides protection against mobile genetic elements (viruses, transposable elements and conjugative plasmids). CRISPR clusters contain spacers, sequences complementary to antecedent mobile elements, and target invading nucleic acids. CRISPR clusters are transcribed and processed into CRISPR RNA (crRNA). Acts as a dsDNA endonuclease. Involved in the integration of spacer DNA into the CRISPR cassette. The protein is CRISPR-associated endonuclease Cas1 of Nanoarchaeum equitans (strain Kin4-M).